A 102-amino-acid chain; its full sequence is Small ribosomal subunit protein uS10 (102 aa).

The protein belongs to the universal ribosomal protein uS10 family. In terms of assembly, part of the 30S ribosomal subunit.

Functionally, involved in the binding of tRNA to the ribosomes. The polypeptide is Small ribosomal subunit protein uS10 (Methanothrix thermoacetophila (strain DSM 6194 / JCM 14653 / NBRC 101360 / PT) (Methanosaeta thermophila)).